A 560-amino-acid polypeptide reads, in one-letter code: Membrane protein insertase YidC (560 aa).

A helical transmembrane segment spans residues 1 to 21; that stretch reads MDIKRTILIAALAIVSYVMVL. The tract at residues 42–66 is disordered; that stretch reads VAPGLPDGVPAANNGASADVPSANA. 5 helical membrane-spanning segments follow: residues 341–361, 367–387, 437–457, 468–488, and 515–535; these read LELT…FWLL, LLGN…GLFF, LGGC…YWVL, WMLW…PIIM, and PIIF…YWVV.

This sequence belongs to the OXA1/ALB3/YidC family. Type 1 subfamily. As to quaternary structure, interacts with the Sec translocase complex via SecD. Specifically interacts with transmembrane segments of nascent integral membrane proteins during membrane integration.

It localises to the cell inner membrane. Its function is as follows. Required for the insertion and/or proper folding and/or complex formation of integral membrane proteins into the membrane. Involved in integration of membrane proteins that insert both dependently and independently of the Sec translocase complex, as well as at least some lipoproteins. Aids folding of multispanning membrane proteins. The protein is Membrane protein insertase YidC of Pseudomonas putida (strain W619).